Consider the following 474-residue polypeptide: GTPase Der (474 aa).

EngA-type G domains follow at residues 3–167 (LTIA…GSER) and 204–379 (IRIA…RVWN). GTP is bound by residues 9-16 (GRPNVGKS), 56-60 (DTAGL), 119-122 (NKSE), 210-217 (GRPNTGKS), 257-261 (DTAGL), and 322-325 (NKWD). The region spanning 380–464 (RRISTAKLNQ…PVRLSLRASD (85 aa)) is the KH-like domain.

Belongs to the TRAFAC class TrmE-Era-EngA-EngB-Septin-like GTPase superfamily. EngA (Der) GTPase family. In terms of assembly, associates with the 50S ribosomal subunit.

GTPase that plays an essential role in the late steps of ribosome biogenesis. The polypeptide is GTPase Der (Bartonella tribocorum (strain CIP 105476 / IBS 506)).